The sequence spans 706 residues: mRNA (2'-O-methyladenosine-N(6)-)-methyltransferase (706 aa).

The disordered stretch occupies residues 1-34 (MANENHGSPREGASLLSHSPGTSSQSQPCSPKPV). Residues 16–29 (LSHSPGTSSQSQPC) show a composition bias toward polar residues. A Phosphoserine modification is found at S30. The 35-residue stretch at 43 to 77 (ELVHAGWEKCWSRRESRPYYFNRFTNQSLWEMPVL) folds into the WW domain. The interval 88–148 (GLNATPLPQD…QSVPSSPSIP (61 aa)) is disordered. The short motif at 109–113 (KSRKR) is the Nuclear localization signal element. At S116 the chain carries Phosphoserine. Positions 132–147 (IPVTPTSQSVPSSPSI) are enriched in low complexity. Position 152 is a phosphothreonine (T152). The substrate site is built by R234 and R264. 552-555 (NPPF) is an S-adenosyl-L-methionine binding site. Substrate-binding positions include E557 and 587 to 591 (WREPP). 613–615 (FEH) contacts S-adenosyl-L-methionine. The segment at 663–706 (TAAYKQSGRSHGSSSSSSSSSSSSEAKDRDSGREQGPSREPHPT) is disordered. Residues 668–686 (QSGRSHGSSSSSSSSSSSS) carry the Nuclear localization signal motif. The span at 675-686 (SSSSSSSSSSSS) shows a compositional bias: low complexity. Residues 687-706 (EAKDRDSGREQGPSREPHPT) are compositionally biased toward basic and acidic residues.

It belongs to the CAPAM family. In terms of assembly, interacts with POLR2A; interacts with the phosphorylated C-terminal domain (CTD) of POLR2A.

The protein localises to the nucleus. The enzyme catalyses a 5'-end (N(7)-methyl 5'-triphosphoguanosine)-(2'-O-methyladenosine) in mRNA + S-adenosyl-L-methionine = a 5'-end (N(7)-methyl 5'-triphosphoguanosine)-(N(6),2'-O-dimethyladenosine) in mRNA + S-adenosyl-L-homocysteine + H(+). Its activity is regulated as follows. Cap-specific adenosine methyltransferase activity is inhibited by zinc. Functionally, cap-specific adenosine methyltransferase that catalyzes formation of N(6),2'-O-dimethyladenosine cap (m6A(m)) by methylating the adenosine at the second transcribed position of capped mRNAs. Recruited to the early elongation complex of RNA polymerase II (RNAPII) via interaction with POLR2A and mediates formation of m6A(m) co-transcriptionally. The sequence is that of mRNA (2'-O-methyladenosine-N(6)-)-methyltransferase from Mus musculus (Mouse).